A 155-amino-acid polypeptide reads, in one-letter code: Plastocyanin, chloroplastic (155 aa).

The N-terminal 58 residues, 1 to 58 (MAALSSAAVSVPSFAAATPMRSSRSSRMVVRASLGKKAASAAVAMAAGAMLLGGSAMA), are a transit peptide targeting the chloroplast. Residues 59–155 (QDVLLGANGG…AGMVGKVTVN (97 aa)) enclose the Plastocyanin-like domain. Positions 95, 140, 143, and 148 each coordinate Cu cation.

This sequence belongs to the plastocyanin family. The cofactor is Cu(2+).

Its subcellular location is the plastid. It localises to the chloroplast thylakoid membrane. Its function is as follows. Participates in electron transfer between P700 and the cytochrome b6-f complex in photosystem I. The chain is Plastocyanin, chloroplastic (PETE) from Hordeum vulgare (Barley).